We begin with the raw amino-acid sequence, 525 residues long: Beta-galactoside alpha-2,6-sialyltransferase 2 (525 aa).

Residues 1–11 (MKPHLKQWRQR) lie on the Cytoplasmic side of the membrane. A helical; Signal-anchor for type II membrane protein transmembrane segment spans residues 12–32 (MLFAIFVWGLLFLAIFIYFTN). The Lumenal portion of the chain corresponds to 33-525 (SNPAAPMPSS…PVTRPNNTNT (493 aa)). 2 disordered regions span residues 85–107 (SASP…DGFD) and 145–183 (RQGA…PEEA). 3 disulfide bridges follow: C249–C515, C292–C444, and C462–C473. N303 and N333 each carry an N-linked (GlcNAc...) asparagine glycan. N521 carries an N-linked (GlcNAc...) asparagine glycan.

Belongs to the glycosyltransferase 29 family.

The protein resides in the golgi apparatus. Its subcellular location is the golgi stack membrane. It carries out the reaction a beta-D-galactoside + CMP-N-acetyl-beta-neuraminate = an N-acetyl-alpha-neuraminyl-(2-&gt;6)-beta-D-galactosyl derivative + CMP + H(+). Its function is as follows. Transfers sialic acid from the donor of substrate CMP-sialic acid to galactose containing acceptor substrates. Has alpha-2,6-sialyltransferase activity toward oligosaccharides that have the Gal-beta-1,4-GlcNAc sequence at the non-reducing end of their carbohydrate groups, but it has weak or no activities toward glycoproteins and glycolipids. This Rattus norvegicus (Rat) protein is Beta-galactoside alpha-2,6-sialyltransferase 2 (St6gal2).